The sequence spans 453 residues: Methionine aminopeptidase 2-1 (453 aa).

A compositionally biased stretch (basic and acidic residues) spans 1 to 12 (MGSKTPDGHRQS). The interval 1-101 (MGSKTPDGHR…TTPPRVPLST (101 aa)) is disordered. Residues 46–57 (GEDDDDDDENEE) are compositionally biased toward acidic residues. Basic residues predominate over residues 67–82 (KKKKRKKSKKKNKKSK). Histidine 210 provides a ligand contact to substrate. A divalent metal cation is bound by residues aspartate 231, aspartate 242, and histidine 306. Histidine 314 lines the substrate pocket. Positions 339 and 434 each coordinate a divalent metal cation.

This sequence belongs to the peptidase M24A family. Methionine aminopeptidase eukaryotic type 2 subfamily. Requires Co(2+) as cofactor. The cofactor is Zn(2+). It depends on Mn(2+) as a cofactor. Fe(2+) is required as a cofactor.

The protein localises to the cytoplasm. It carries out the reaction Release of N-terminal amino acids, preferentially methionine, from peptides and arylamides.. Cotranslationally removes the N-terminal methionine from nascent proteins. The N-terminal methionine is often cleaved when the second residue in the primary sequence is small and uncharged (Met-Ala-, Cys, Gly, Pro, Ser, Thr, or Val). The chain is Methionine aminopeptidase 2-1 from Aspergillus terreus (strain NIH 2624 / FGSC A1156).